The primary structure comprises 277 residues: Phosphonates import ATP-binding protein PhnC 2 (277 aa).

Positions isoleucine 5–alanine 253 constitute an ABC transporter domain. Glycine 37–serine 44 contributes to the ATP binding site.

This sequence belongs to the ABC transporter superfamily. Phosphonates importer (TC 3.A.1.9.1) family. As to quaternary structure, the complex is composed of two ATP-binding proteins (PhnC), two transmembrane proteins (PhnE) and a solute-binding protein (PhnD).

It is found in the cell inner membrane. It catalyses the reaction phosphonate(out) + ATP + H2O = phosphonate(in) + ADP + phosphate + H(+). Its function is as follows. Part of the ABC transporter complex PhnCDE involved in phosphonates import. Responsible for energy coupling to the transport system. In Pseudomonas syringae pv. syringae (strain B728a), this protein is Phosphonates import ATP-binding protein PhnC 2.